The primary structure comprises 210 residues: MIKAIVGRKLQMSQIFAEDGTAVPITLIQAGPCTVTQVKTPERDGYSALQIGFGSRKPKNVNKPMKGHLDKVGKGYFEVLREIRMENASDHEVGEDLAADVFEIGERIDVIGTTKGKGYAGTIKRWGFQRGPSGHGSKNIREPGSTGNATFPGRVIKGKKMPGQKGNKRTTVMNLRIIDVRPEENLLIVKGAVPGSQNGIVLIRKTNRAK.

The tract at residues 126–167 is disordered; the sequence is WGFQRGPSGHGSKNIREPGSTGNATFPGRVIKGKKMPGQKGN. Basic residues predominate over residues 156 to 167; that stretch reads IKGKKMPGQKGN.

This sequence belongs to the universal ribosomal protein uL3 family. In terms of assembly, part of the 50S ribosomal subunit. Forms a cluster with proteins L14 and L19.

In terms of biological role, one of the primary rRNA binding proteins, it binds directly near the 3'-end of the 23S rRNA, where it nucleates assembly of the 50S subunit. This is Large ribosomal subunit protein uL3 from Syntrophobacter fumaroxidans (strain DSM 10017 / MPOB).